We begin with the raw amino-acid sequence, 282 residues long: MSNKIISLGSIEIANDKPFVLFGGMNVLESRDLAMQIAETYAEVTQKLGIPYVFKASFDKANRSSVNSYRGPGMEEGLKIFEEIKSTFNLPLITDVHEVHQCAPVAEVVDVIQLPAFLARQTDLVVAMAKTGAIINVKKPQFLAPHEMRHIITKFNEAGNDEIMLCERGSSFGYNNLVVDMLGMDEMKQTGYPVIFDATHALQRPGGRSDSAGGRRAQATELARSGMALGLAGLFIEAHPDPDNAKCDGPCALPLHQLENYLTQMKAIDDLVKSFEPIDTSK.

The protein belongs to the KdsA family.

Its subcellular location is the cytoplasm. It catalyses the reaction D-arabinose 5-phosphate + phosphoenolpyruvate + H2O = 3-deoxy-alpha-D-manno-2-octulosonate-8-phosphate + phosphate. The protein operates within carbohydrate biosynthesis; 3-deoxy-D-manno-octulosonate biosynthesis; 3-deoxy-D-manno-octulosonate from D-ribulose 5-phosphate: step 2/3. Its pathway is bacterial outer membrane biogenesis; lipopolysaccharide biosynthesis. In Shewanella pealeana (strain ATCC 700345 / ANG-SQ1), this protein is 2-dehydro-3-deoxyphosphooctonate aldolase.